The primary structure comprises 362 residues: Phosphoserine aminotransferase (362 aa).

Residue Arg-42 participates in L-glutamate binding. Residues Trp-102, Thr-154, Asp-174, and Gln-197 each coordinate pyridoxal 5'-phosphate. Position 198 is an N6-(pyridoxal phosphate)lysine (Lys-198). 239 to 240 (NT) is a pyridoxal 5'-phosphate binding site.

The protein belongs to the class-V pyridoxal-phosphate-dependent aminotransferase family. SerC subfamily. Homodimer. Pyridoxal 5'-phosphate is required as a cofactor.

It is found in the cytoplasm. The enzyme catalyses O-phospho-L-serine + 2-oxoglutarate = 3-phosphooxypyruvate + L-glutamate. The catalysed reaction is 4-(phosphooxy)-L-threonine + 2-oxoglutarate = (R)-3-hydroxy-2-oxo-4-phosphooxybutanoate + L-glutamate. The protein operates within amino-acid biosynthesis; L-serine biosynthesis; L-serine from 3-phospho-D-glycerate: step 2/3. It participates in cofactor biosynthesis; pyridoxine 5'-phosphate biosynthesis; pyridoxine 5'-phosphate from D-erythrose 4-phosphate: step 3/5. In terms of biological role, catalyzes the reversible conversion of 3-phosphohydroxypyruvate to phosphoserine and of 3-hydroxy-2-oxo-4-phosphonooxybutanoate to phosphohydroxythreonine. The chain is Phosphoserine aminotransferase from Haemophilus ducreyi (strain 35000HP / ATCC 700724).